Consider the following 462-residue polypeptide: Glutamate--tRNA ligase (462 aa).

The 'HIGH' region motif lies at 11–21; the sequence is PSPTGFIHLGN. Residues 243–247 carry the 'KMSKS' region motif; it reads KMSKR. An ATP-binding site is contributed by lysine 246.

This sequence belongs to the class-I aminoacyl-tRNA synthetase family. Glutamate--tRNA ligase type 1 subfamily. As to quaternary structure, monomer.

The protein resides in the cytoplasm. It catalyses the reaction tRNA(Glu) + L-glutamate + ATP = L-glutamyl-tRNA(Glu) + AMP + diphosphate. Functionally, catalyzes the attachment of glutamate to tRNA(Glu) in a two-step reaction: glutamate is first activated by ATP to form Glu-AMP and then transferred to the acceptor end of tRNA(Glu). The sequence is that of Glutamate--tRNA ligase from Albidiferax ferrireducens (strain ATCC BAA-621 / DSM 15236 / T118) (Rhodoferax ferrireducens).